The following is a 50-amino-acid chain: Alpha-conotoxin CnIG (50 aa).

A signal peptide spans 1 to 7 (LTTTVVS). Positions 1–13 (LTTTVVSFPSDSA) are enriched in polar residues. The disordered stretch occupies residues 1–26 (LTTTVVSFPSDSASDGRDNEAKDERS). The propeptide occupies 8–35 (FPSDSASDGRDNEAKDERSDMYELKRNG). Over residues 14 to 26 (SDGRDNEAKDERS) the composition is skewed to basic and acidic residues. Disulfide bonds link C37-C42 and C38-C48. Cysteine amide is present on C48.

This sequence belongs to the conotoxin A superfamily. In terms of tissue distribution, expressed by the venom duct.

The protein resides in the secreted. In Conus consors (Singed cone), this protein is Alpha-conotoxin CnIG.